We begin with the raw amino-acid sequence, 293 residues long: N-acetylmannosamine kinase (293 aa).

Residues 5–12 (AIDIGGTK) and 133–140 (GVGGGLVI) contribute to the ATP site. Positions 157, 167, 169, and 174 each coordinate Zn(2+).

It belongs to the ROK (NagC/XylR) family. NanK subfamily. As to quaternary structure, homodimer.

The enzyme catalyses an N-acyl-D-mannosamine + ATP = an N-acyl-D-mannosamine 6-phosphate + ADP + H(+). It functions in the pathway amino-sugar metabolism; N-acetylneuraminate degradation; D-fructose 6-phosphate from N-acetylneuraminate: step 2/5. Functionally, catalyzes the phosphorylation of N-acetylmannosamine (ManNAc) to ManNAc-6-P. This chain is N-acetylmannosamine kinase, found in Vibrio vulnificus (strain CMCP6).